The sequence spans 317 residues: Methyltransferase CPUR_05424 (317 aa).

The interval D57–C149 is methyltransferase domain.

The protein belongs to the methyltransferase superfamily.

It participates in pigment biosynthesis. Its function is as follows. Methyltransferase; part of the ergochrome gene cluster responsible for the typical purple-black color of the ergot sclerotia. The ergochrome gene cluster produces several ergot pigments including the yellow ergochrome secalonic acid and its derivatives, as well as the red anthraquinones endocrocin and clavorubin. The pathway begins with the synthesis of atrochrysone thioester by the polyketide synthase (PKS) CPUR_05437. The atrochrysone carboxyl ACP thioesterase CPUR_05436 then breaks the thioester bond and releases the atrochrysone carboxylic acid from CPUR_05437. The atrochrysone carboxylic acid is then converted to atrochrysone which is further transformed into emodin anthrone. The next step is performed by the anthrone oxygenase CPUR_05434 that catalyzes the oxidation of emodinanthrone to emodin. Emodin is further modified to yield monodictyphenone via several steps involving CPUR_05427, CPUR_05428, CPUR_05429 and CPUR_05430. The short chain dehydrogenase/reductase CPUR_05418 then catalyzes the C-5 ketoreduction to give the xanthone skeleton of the monomeric units. Ergochromes formation requires further dimerization steps of different xanthone units, probably catalyzed by the cytochrome P450 monooxygenase CPUR_05419. CPUR_05425, CPUR_05426 and CPUR_05431 are unique to Claviceps, thus it is likely that they are involved in further modification of xanthone units or in their dimerization. The yellow ergochromes and the red anthraquinone pigments endocrocin and clavorubin are products from the same PKS derived precursors and the latter are likely shunt products in the pathway of xanthone biosynthesis. It is proposed that atrochrysone carboxylic acid released from the PKS CPUR_05437 can also be converted to endocrocin anthrone which is further oxidized into endocrocin by CPUR_05435. Endocrocin could be then modified to clavorubin, possibly by CPUR_05423 and CPUR_05431. Clavorubin is the principal anthraquinone metabolite produced by the cluster with a much higher yield compared to endocrocin. This Claviceps purpurea (strain 20.1) (Ergot fungus) protein is Methyltransferase CPUR_05424.